A 179-amino-acid chain; its full sequence is Alpha-tubulin N-acetyltransferase (179 aa).

Positions 1 to 175 (MRVEVVRAPG…NRFVVFDAYF (175 aa)) constitute an N-acetyltransferase domain. Acetyl-CoA-binding positions include 109–122 (FYVD…GVGL) and 145–154 (SPKLFAFLKK).

The protein belongs to the acetyltransferase ATAT1 family.

The catalysed reaction is L-lysyl-[alpha-tubulin] + acetyl-CoA = N(6)-acetyl-L-lysyl-[alpha-tubulin] + CoA + H(+). Its function is as follows. Specifically acetylates 'Lys-40' in alpha-tubulin on the lumenal side of microtubules. Promotes microtubule destabilization and accelerates microtubule dynamics; this activity may be independent of acetylation activity. Acetylates alpha-tubulin with a slow enzymatic rate, due to a catalytic site that is not optimized for acetyl transfer. Enters the microtubule through each end and diffuses quickly throughout the lumen of microtubules. Acetylates only long/old microtubules because of its slow acetylation rate since it does not have time to act on dynamically unstable microtubules before the enzyme is released. The polypeptide is Alpha-tubulin N-acetyltransferase (Phytophthora infestans (strain T30-4) (Potato late blight agent)).